A 258-amino-acid chain; its full sequence is 4-hydroxy-tetrahydrodipicolinate reductase (258 aa).

NAD(+) is bound by residues 8–13, 93–95, and 117–120; these read GVTGRM, GTT, and AANF. The active-site Proton donor/acceptor is the His-149. His-150 provides a ligand contact to (S)-2,3,4,5-tetrahydrodipicolinate. The active-site Proton donor is Lys-153. 159–160 provides a ligand contact to (S)-2,3,4,5-tetrahydrodipicolinate; it reads GT.

The protein belongs to the DapB family.

Its subcellular location is the cytoplasm. The enzyme catalyses (S)-2,3,4,5-tetrahydrodipicolinate + NAD(+) + H2O = (2S,4S)-4-hydroxy-2,3,4,5-tetrahydrodipicolinate + NADH + H(+). It catalyses the reaction (S)-2,3,4,5-tetrahydrodipicolinate + NADP(+) + H2O = (2S,4S)-4-hydroxy-2,3,4,5-tetrahydrodipicolinate + NADPH + H(+). The protein operates within amino-acid biosynthesis; L-lysine biosynthesis via DAP pathway; (S)-tetrahydrodipicolinate from L-aspartate: step 4/4. In terms of biological role, catalyzes the conversion of 4-hydroxy-tetrahydrodipicolinate (HTPA) to tetrahydrodipicolinate. This Thermomicrobium roseum (strain ATCC 27502 / DSM 5159 / P-2) protein is 4-hydroxy-tetrahydrodipicolinate reductase.